The chain runs to 94 residues: Small ribosomal subunit protein uS17 (94 aa).

The segment at 1–22 is disordered; it reads MASSSTEGQAAARGRKKSWTGK.

The protein belongs to the universal ribosomal protein uS17 family. Part of the 30S ribosomal subunit.

Functionally, one of the primary rRNA binding proteins, it binds specifically to the 5'-end of 16S ribosomal RNA. The sequence is that of Small ribosomal subunit protein uS17 from Chlorobium luteolum (strain DSM 273 / BCRC 81028 / 2530) (Pelodictyon luteolum).